Consider the following 205-residue polypeptide: MTFPPLKSLLKFYAVVPTADWVGRMVKAGADTVQLRCKTLHGNELKREIARCVAACQGSRTQLFINDHWREAIEAGAYGVHLGQEDMDTADLAAIAAAGLRLGLSTHSVAELDRALFVHPGYIASGAIFQTTTKQMPTAPQGLDKLREYVEQARGTPVVAIGGIDLNNARAVLATGVSSLAAVRAVTEAANPEAVVKAFQALWDG.

4-amino-2-methyl-5-(diphosphooxymethyl)pyrimidine-binding positions include 34–38 (QLRCK) and N66. Residues D67 and D86 each contribute to the Mg(2+) site. S105 contributes to the 4-amino-2-methyl-5-(diphosphooxymethyl)pyrimidine binding site. A 2-[(2R,5Z)-2-carboxy-4-methylthiazol-5(2H)-ylidene]ethyl phosphate-binding site is contributed by 131-133 (TTT). K134 lines the 4-amino-2-methyl-5-(diphosphooxymethyl)pyrimidine pocket. Position 163 (G163) interacts with 2-[(2R,5Z)-2-carboxy-4-methylthiazol-5(2H)-ylidene]ethyl phosphate.

The protein belongs to the thiamine-phosphate synthase family. The cofactor is Mg(2+).

The enzyme catalyses 2-[(2R,5Z)-2-carboxy-4-methylthiazol-5(2H)-ylidene]ethyl phosphate + 4-amino-2-methyl-5-(diphosphooxymethyl)pyrimidine + 2 H(+) = thiamine phosphate + CO2 + diphosphate. The catalysed reaction is 2-(2-carboxy-4-methylthiazol-5-yl)ethyl phosphate + 4-amino-2-methyl-5-(diphosphooxymethyl)pyrimidine + 2 H(+) = thiamine phosphate + CO2 + diphosphate. It catalyses the reaction 4-methyl-5-(2-phosphooxyethyl)-thiazole + 4-amino-2-methyl-5-(diphosphooxymethyl)pyrimidine + H(+) = thiamine phosphate + diphosphate. It participates in cofactor biosynthesis; thiamine diphosphate biosynthesis; thiamine phosphate from 4-amino-2-methyl-5-diphosphomethylpyrimidine and 4-methyl-5-(2-phosphoethyl)-thiazole: step 1/1. Its function is as follows. Condenses 4-methyl-5-(beta-hydroxyethyl)thiazole monophosphate (THZ-P) and 2-methyl-4-amino-5-hydroxymethyl pyrimidine pyrophosphate (HMP-PP) to form thiamine monophosphate (TMP). The protein is Thiamine-phosphate synthase of Neisseria gonorrhoeae (strain ATCC 700825 / FA 1090).